The sequence spans 376 residues: Erythronate-4-phosphate dehydrogenase (376 aa).

The substrate site is built by S45 and T66. Positions 146 and 175 each coordinate NAD(+). R209 is a catalytic residue. NAD(+) is bound at residue D233. E238 is an active-site residue. The active-site Proton donor is the H255. G258 provides a ligand contact to NAD(+). Y259 contacts substrate.

The protein belongs to the D-isomer specific 2-hydroxyacid dehydrogenase family. PdxB subfamily. As to quaternary structure, homodimer.

The protein localises to the cytoplasm. It carries out the reaction 4-phospho-D-erythronate + NAD(+) = (R)-3-hydroxy-2-oxo-4-phosphooxybutanoate + NADH + H(+). The protein operates within cofactor biosynthesis; pyridoxine 5'-phosphate biosynthesis; pyridoxine 5'-phosphate from D-erythrose 4-phosphate: step 2/5. In terms of biological role, catalyzes the oxidation of erythronate-4-phosphate to 3-hydroxy-2-oxo-4-phosphonooxybutanoate. This chain is Erythronate-4-phosphate dehydrogenase, found in Baumannia cicadellinicola subsp. Homalodisca coagulata.